The following is a 695-amino-acid chain: Testis-specific Y-encoded-like protein 2 (695 aa).

Residues 1-56 (MDRPDEGPPAKTRRLSSSESPQRDPPPPPPPPPLLRLPLPPPQQRPRLQEETEAAQ) are disordered. Lys-11 participates in a covalent cross-link: Glycyl lysine isopeptide (Lys-Gly) (interchain with G-Cter in SUMO2). Phosphoserine occurs at positions 18 and 20. The segment covering 23–44 (RDPPPPPPPPPLLRLPLPPPQQ) has biased composition (pro residues). Glycyl lysine isopeptide (Lys-Gly) (interchain with G-Cter in SUMO2) cross-links involve residues Lys-163 and Lys-165. The tract at residues 175-207 (EDEDEQESMRSSRRRRRRRRRKQRKVKRESRQR) is disordered. Residues 185–202 (SSRRRRRRRRRKQRKVKR) are compositionally biased toward basic residues. A Phosphothreonine modification is found at Thr-340. Disordered regions lie at residues 471–603 (DINE…RDIE) and 632–695 (VEEE…GKTG). The span at 481-491 (SPDHDEVRNET) shows a compositional bias: basic and acidic residues. Acidic residues predominate over residues 496–518 (ESADDNETTDNNESADDNNENPE). Residues 519–535 (DNNKNADDNKENPDNNK) show a composition bias toward basic and acidic residues. Residues 539 to 557 (GNNFFNGGFWGSHGNNQDS) are compositionally biased toward low complexity. 2 stretches are compositionally biased toward acidic residues: residues 558 to 601 (SDSD…DDRD) and 632 to 677 (VEEE…DLED). A phosphoserine mark is found at Ser-670 and Ser-673.

It belongs to the nucleosome assembly protein (NAP) family. As to quaternary structure, interacts with histones. Interacts with CASK. Part of a complex containing CASK, TBR1 and TSPYL2. In terms of processing, phosphorylation at Ser-20 and/or Thr-340 impairs function on cell proliferation. As to expression, ubiquitously expressed, with highest levels in testis, adrenal gland, cerebral cortex, ovary, skeletal muscle and spleen. Present in testis, adrenal gland, cerebral cortex and ovary (at protein level).

It is found in the nucleus. The protein resides in the cytoplasm. Part of the CASK/TBR1/TSPYL2 transcriptional complex which modulates gene expression in response to neuronal synaptic activity, probably by facilitating nucleosome assembly. May inhibit cell proliferation by inducing p53-dependent CDKN1A expression. This is Testis-specific Y-encoded-like protein 2 (TSPYL2) from Macaca fascicularis (Crab-eating macaque).